A 249-amino-acid polypeptide reads, in one-letter code: T-cell immunoreceptor with Ig and ITIM domains (249 aa).

The N-terminal stretch at 1 to 28 is a signal peptide; sequence MHGWLLLVWVQGLIQAAFLATAIGATAG. The Ig-like V-type domain maps to 29–127; it reads TIDTKRNISA…GGIYKGRIFL (99 aa). Topologically, residues 29 to 148 are extracellular; the sequence is TIDTKRNISA…LAQFQTAPLG (120 aa). A homodimerization region spans residues 35–45; the sequence is NISAEEGGSVI. The cysteines at positions 48 and 111 are disulfide-linked. N-linked (GlcNAc...) asparagine glycosylation is present at asparagine 104. A helical transmembrane segment spans residues 149–169; the sequence is GTMAAVLGLICLMVTGVTVLA. The Cytoplasmic portion of the chain corresponds to 170–249; the sequence is RKDKSIRMHS…ESFIAVSKTG (80 aa). Residues 182 to 222 are disordered; it reads SGLGRTEAEPQEWNLRSLSSPGSPVQTQTAPAGPCGEQAED. Residues 195–211 are compositionally biased toward polar residues; that stretch reads NLRSLSSPGSPVQTQTA. Residues 234 to 239 carry the ITIM motif motif; it reads LSYRSL.

In terms of assembly, homodimer in cis; binds with high affinity to PVR, forming a heterotetrameric assembly of two TIGIT and two PVR molecules. Binds with lower affinity to NECTIN2 and NECTIN3. Interacts with GRB2. Interacts with NECTIN4.

It localises to the cell membrane. Its function is as follows. Inhibitory receptor that plays a role in the modulation of immune responses. Suppresses T-cell activation by promoting the generation of mature immunoregulatory dendritic cells. Upon binding to its ligands PVR/CD155 or NECTIN2/CD112, which are expressed on antigen-presenting cells, sends inhibitory signals to the T-cell or NK cell. Mechanistically, interaction with ligand leads to phosphorylation of the cytoplasmic tail by Src family tyrosine kinases such as FYN or LCK, allowing subsequent binding to adapter GRB2 and SHIP1/INPP5D. In turn, inhibits PI3K and MAPK signaling cascades. In addition, associates with beta-arrestin-2/ARRB2 to recruit SHIP1/INPP5D that suppresses autoubiquitination of TRAF6 and subsequently inhibits NF-kappa-B signaling pathway. Also acts as a receptor for NECTIN4 to inhibit NK cell cytotoxicity. The chain is T-cell immunoreceptor with Ig and ITIM domains from Mus musculus (Mouse).